Here is a 527-residue protein sequence, read N- to C-terminus: MLSKTFLLSSAVLWARVANAAFGITDNGSSYTIDANSPNPLKFTVNKSSCDITSIVYYGSEFQYSGKGSHIGSGLGSATVSATQSGDYIKVTCDTSSLTHYFVVHNGDPIIHMATYITAEPDIGELRFIARLNSNLLPNEEPFGDVSTTSGGSAIEGSDVFLVNGETRSKFYSSERFIDDHRHCISGSAHRVCMILNQYESSSGGPFFRDINSNNGGDYNALYWYMNSGHVQTESFRTGLHGPYSMYFSRSGTPSTNIDTSFFASLGIKGYVAANGRGTVTGKASGADSSMDWVVHWYNNDAQYWTYTASDGSFTSPAMKPGTYTMKYYQGEFPVAETTVTVSAGSSTTKNISGSVKTGTTIFKIGEWDGQPTGFRNADKQLRMHPSDSRMDSWSSTYTVGSSSLSDFPMAVFKSVNNPVTIKFTATSAQTGAATLRIGTTLSFAGGRPQATINSYTGPAPSAPTNLNSRGVTRGAYRGLGEVYDVSVPAGTIVTGENTITISVISGSSGDAFLSPNVVFDCIELFQ.

An N-terminal signal peptide occupies residues 1-20; it reads MLSKTFLLSSAVLWARVANA. Asparagine 27 and asparagine 46 each carry an N-linked (GlcNAc...) asparagine glycan. 2 cysteine pairs are disulfide-bonded: cysteine 50–cysteine 93 and cysteine 184–cysteine 193. Asparagine 351 carries an N-linked (GlcNAc...) asparagine glycan.

Belongs to the polysaccharide lyase 4 family.

The protein resides in the secreted. It carries out the reaction Endotype eliminative cleavage of L-alpha-rhamnopyranosyl-(1-&gt;4)-alpha-D-galactopyranosyluronic acid bonds of rhamnogalacturonan I domains in ramified hairy regions of pectin leaving L-rhamnopyranose at the reducing end and 4-deoxy-4,5-unsaturated D-galactopyranosyluronic acid at the non-reducing end.. Pectinolytic enzymes consist of four classes of enzymes: pectin lyase, polygalacturonase, pectin methylesterase and rhamnogalacturonase. Degrades the rhamnogalacturonan I (RG-I) backbone of pectin. Active against linseed rhamnogalacturonan. The chain is Rhamnogalacturonate lyase A (rglA) from Emericella nidulans (strain FGSC A4 / ATCC 38163 / CBS 112.46 / NRRL 194 / M139) (Aspergillus nidulans).